We begin with the raw amino-acid sequence, 431 residues long: tRNA (adenine(37)-N6)-methyltransferase (431 aa).

One can recognise a TsaA-like domain in the interval 30–168 (TEPIGYLESC…YIADYDSPQN (139 aa)). S-adenosyl-L-methionine is bound by residues 47-49 (PRQ), 90-91 (HK), R117, L127, and 148-151 (IDGT). Positions 196-242 (LSGRGKVQPRQSTKERPKCLEDRTSGENSQKSRDMSEIQHTLPEDRE) are disordered. Over residues 207–242 (STKERPKCLEDRTSGENSQKSRDMSEIQHTLPEDRE) the composition is skewed to basic and acidic residues.

This sequence belongs to the tRNA methyltransferase O family.

The enzyme catalyses N(6)-L-threonylcarbamoyladenosine(37) in tRNA + S-adenosyl-L-methionine = N(6)-methyl,N(6)-L-threonylcarbamoyladenosine(37) in tRNA + S-adenosyl-L-homocysteine + H(+). S-adenosyl-L-methionine-dependent methyltransferase responsible for the addition of the methyl group in the formation of N6-methyl-N6-threonylcarbamoyladenosine at position 37 (m(6)t(6)A37) of the tRNA anticodon loop of tRNA(Ser)(GCU). The methyl group of m(6)t(6)A37 may improve the efficiency of the tRNA decoding ability. May bind to tRNA. This chain is tRNA (adenine(37)-N6)-methyltransferase, found in Mus musculus (Mouse).